The primary structure comprises 399 residues: MTSRFGHSQHPRRGRSARARAGRREGVQSNFPATQVLERSAHSLPARQRTALVMAGGTGGHIFPGLALAEALRERGWQVHWLGTPGSMEERLVPPRGFAFEPIDFSGVRGKGLKTLLALPLRLARACLQARAVVRRLQPDVVIGLGGYVTFPGGIAARLARKPLLLHEQNSVPGMANKLLSRLATRVYTAFPNVLPDAQWVGNPMRRAFTRQPRPERRLAGREGPLRLLVVGGSLGAKALNDIVPQALAWIHEQDRPIVTHQSGESQIEALRRSYAAAGVEATLTPFIEDTAAAFAEADLVLCRAGASTVTEIAAVGAAAVFVPFPHAVDDHQTTNAQYLVKVGGGWLVQQADLTAHGLAEMLQNMKRQDLLAKAQKARTMRKINATRDIVAACERLAR.

The segment at 1-31 (MTSRFGHSQHPRRGRSARARAGRREGVQSNF) is disordered. The segment covering 7–21 (HSQHPRRGRSARARA) has biased composition (basic residues). UDP-N-acetyl-alpha-D-glucosamine contacts are provided by residues 58–60 (TGG), Asn170, Arg206, Ser234, Ile288, and Gln333.

Belongs to the glycosyltransferase 28 family. MurG subfamily.

Its subcellular location is the cell inner membrane. It catalyses the reaction di-trans,octa-cis-undecaprenyl diphospho-N-acetyl-alpha-D-muramoyl-L-alanyl-D-glutamyl-meso-2,6-diaminopimeloyl-D-alanyl-D-alanine + UDP-N-acetyl-alpha-D-glucosamine = di-trans,octa-cis-undecaprenyl diphospho-[N-acetyl-alpha-D-glucosaminyl-(1-&gt;4)]-N-acetyl-alpha-D-muramoyl-L-alanyl-D-glutamyl-meso-2,6-diaminopimeloyl-D-alanyl-D-alanine + UDP + H(+). It participates in cell wall biogenesis; peptidoglycan biosynthesis. In terms of biological role, cell wall formation. Catalyzes the transfer of a GlcNAc subunit on undecaprenyl-pyrophosphoryl-MurNAc-pentapeptide (lipid intermediate I) to form undecaprenyl-pyrophosphoryl-MurNAc-(pentapeptide)GlcNAc (lipid intermediate II). The sequence is that of UDP-N-acetylglucosamine--N-acetylmuramyl-(pentapeptide) pyrophosphoryl-undecaprenol N-acetylglucosamine transferase from Acidovorax sp. (strain JS42).